We begin with the raw amino-acid sequence, 314 residues long: MKQNAKISLIGSGNIGGTLAHLISLRELGDIVLFDVTEGVPQGKALDLMQAGTIAGSDIKIKGTNDYKDIEGSDAIIITAGLPRKPGMSREDLISINTGIMKTVAANVKKYAPDAFVIVITNPLDVMVYVMLKESGLPHNKVIGMAGVLDSSRFNLFLAEEFKVSVNNVNSMVLGGHGDAMVPLARYSTISGVPIPDLIKMGLSSNENIEKIIDRTRNGGGEIVALLKTGSAYYAPAASAIEMLESYLKDKRQILTCAAHLQGEYGVHDLYVGVPIMIGKEGVLRVIELQLTAEEKALFDKSVEGVKKLIETIK.

Residues 11–16 and D35 each bind NAD(+); that span reads GSGNIG. Substrate contacts are provided by R84 and R90. Residues N97 and 120–122 contribute to the NAD(+) site; that span reads ITN. 2 residues coordinate substrate: N122 and R153. The active-site Proton acceptor is the H177.

It belongs to the LDH/MDH superfamily. MDH type 3 family.

The enzyme catalyses (S)-malate + NAD(+) = oxaloacetate + NADH + H(+). Its function is as follows. Catalyzes the reversible oxidation of malate to oxaloacetate. The sequence is that of Malate dehydrogenase from Rickettsia conorii (strain ATCC VR-613 / Malish 7).